A 111-amino-acid polypeptide reads, in one-letter code: MISTFALFWALCIVCIINMARYYSSLRVLLMILRDCDPLLYQYVDGGGFFTSHGQPSKQIRLVGYIYAQRYLDHHDPEFIRRCERVRGQFLLTTALCGLIVISLIAMMMWY.

2 consecutive transmembrane segments (helical) span residues 1-21 (MIST…NMAR) and 90-110 (FLLT…MMMW).

The protein belongs to the universal stress protein B family.

The protein resides in the cell inner membrane. This is Universal stress protein B from Pectobacterium atrosepticum (strain SCRI 1043 / ATCC BAA-672) (Erwinia carotovora subsp. atroseptica).